The chain runs to 191 residues: UPF0302 protein SA1295 (191 aa).

Belongs to the UPF0302 family.

The polypeptide is UPF0302 protein SA1295 (Staphylococcus aureus (strain N315)).